Reading from the N-terminus, the 92-residue chain is Protein AC152 (92 aa).

Functionally, acts as a transactivator of AC102 and HE65 genes. Therefore, participates in the global recruitment of G-actin to the host nucleus. This chain is Protein AC152 (AC152), found in Autographa californica nuclear polyhedrosis virus (AcMNPV).